Here is a 69-residue protein sequence, read N- to C-terminus: uncharacterized protein (69 aa).

The interval 22–48 (LFRKSRELSPIKPVRTPTPPAPTPPPM) is disordered. Residues 37-48 (TPTPPAPTPPPM) are compositionally biased toward pro residues.

This is an uncharacterized protein from Lepidoptera (butterflies and moths).